The following is a 795-amino-acid chain: Phenylalanine--tRNA ligase beta subunit (795 aa).

In terms of domain architecture, tRNA-binding spans 39–148; it reads AGTFNGVVVG…LDAPIGTDLR (110 aa). Residues 401–476 form the B5 domain; that stretch reads PKVNTVQLRR…RIYGYNSIPN (76 aa). D454, D460, E463, and E464 together coordinate Mg(2+). The FDX-ACB domain maps to 701–794; the sequence is SKFPANRRDL…VKQRFNAELR (94 aa).

The protein belongs to the phenylalanyl-tRNA synthetase beta subunit family. Type 1 subfamily. In terms of assembly, tetramer of two alpha and two beta subunits. Mg(2+) serves as cofactor.

The protein localises to the cytoplasm. It catalyses the reaction tRNA(Phe) + L-phenylalanine + ATP = L-phenylalanyl-tRNA(Phe) + AMP + diphosphate + H(+). The chain is Phenylalanine--tRNA ligase beta subunit from Haemophilus influenzae (strain 86-028NP).